An 810-amino-acid chain; its full sequence is Lon protease (810 aa).

The Lon N-terminal domain maps to 32–226 (LPAIAMRSNM…RILDILARET (195 aa)). 376–383 (GPPGVGKT) contacts ATP. The region spanning 612 to 791 (KPMIGVTTGL…EEVLEVALNE (180 aa)) is the Lon proteolytic domain. Residues Ser-697 and Lys-740 contribute to the active site.

The protein belongs to the peptidase S16 family. As to quaternary structure, homohexamer. Organized in a ring with a central cavity.

It is found in the cytoplasm. The catalysed reaction is Hydrolysis of proteins in presence of ATP.. In terms of biological role, ATP-dependent serine protease that mediates the selective degradation of mutant and abnormal proteins as well as certain short-lived regulatory proteins. Required for cellular homeostasis and for survival from DNA damage and developmental changes induced by stress. Degrades polypeptides processively to yield small peptide fragments that are 5 to 10 amino acids long. Binds to DNA in a double-stranded, site-specific manner. The chain is Lon protease from Fervidobacterium nodosum (strain ATCC 35602 / DSM 5306 / Rt17-B1).